Reading from the N-terminus, the 434-residue chain is UDP-N-acetylglucosamine 1-carboxyvinyltransferase 1 (434 aa).

22–23 is a phosphoenolpyruvate binding site; sequence KN. Arg93 serves as a coordination point for UDP-N-acetyl-alpha-D-glucosamine. Cys117 (proton donor) is an active-site residue. At Cys117 the chain carries 2-(S-cysteinyl)pyruvic acid O-phosphothioketal. Residues 122–126, Asp306, and Val328 each bind UDP-N-acetyl-alpha-D-glucosamine; that span reads RPIDQ.

The protein belongs to the EPSP synthase family. MurA subfamily.

Its subcellular location is the cytoplasm. It carries out the reaction phosphoenolpyruvate + UDP-N-acetyl-alpha-D-glucosamine = UDP-N-acetyl-3-O-(1-carboxyvinyl)-alpha-D-glucosamine + phosphate. The protein operates within cell wall biogenesis; peptidoglycan biosynthesis. Functionally, cell wall formation. Adds enolpyruvyl to UDP-N-acetylglucosamine. The protein is UDP-N-acetylglucosamine 1-carboxyvinyltransferase 1 of Bacillus anthracis.